Consider the following 201-residue polypeptide: 3-isopropylmalate dehydratase small subunit (201 aa).

The protein belongs to the LeuD family. LeuD type 1 subfamily. In terms of assembly, heterodimer of LeuC and LeuD.

The enzyme catalyses (2R,3S)-3-isopropylmalate = (2S)-2-isopropylmalate. It participates in amino-acid biosynthesis; L-leucine biosynthesis; L-leucine from 3-methyl-2-oxobutanoate: step 2/4. Catalyzes the isomerization between 2-isopropylmalate and 3-isopropylmalate, via the formation of 2-isopropylmaleate. The polypeptide is 3-isopropylmalate dehydratase small subunit (Rhodopseudomonas palustris (strain HaA2)).